A 455-amino-acid chain; its full sequence is MSFSDQLGFTFSAPQRRIWQVRDIVSAVRAALEREYADVWVEGEISNFRPADSGHLYFSLKDESTQLRIVMFRSQARLLKFRPENGLKVIARGKVTLYEGRGELQLMAEYLEPQGAGALQIAFEQLKAKLQAEGLFARERKKPIPALPKKIGVVTSPRGAVIQDILNVLRRRHNSVHVLIFPAQVQGETAASEVASGVRYFNKAANVEVIIVARGGGSIEDLAAFNDEGLARSIATSTIPVISAVGHETDFTICDFVADLRAPTPSAAAELVIRSKQEVDERLTALSTHLARALRVRLLEYEKKLDRLARHGAFGGMQTAIARRQQRVDDLAFRLSVAQTNVFRQLHRRLDVASTRVRHHDLRSRFAAEHRELSARVEKLAATLRANLMRRRTRIERLAGQLQGLSPISILERGYALVFDAEGRLLKDARQVREGNTIRAQLALGQISAVVKKPE.

The protein belongs to the XseA family. Heterooligomer composed of large and small subunits.

It is found in the cytoplasm. It carries out the reaction Exonucleolytic cleavage in either 5'- to 3'- or 3'- to 5'-direction to yield nucleoside 5'-phosphates.. Bidirectionally degrades single-stranded DNA into large acid-insoluble oligonucleotides, which are then degraded further into small acid-soluble oligonucleotides. This Koribacter versatilis (strain Ellin345) protein is Exodeoxyribonuclease 7 large subunit.